A 205-amino-acid chain; its full sequence is RNA pyrophosphohydrolase (205 aa).

A Nudix hydrolase domain is found at 6-149; it reads GFRPNVGIVL…KRGVYARALR (144 aa). Positions 38 to 59 match the Nudix box motif; that stretch reads GGMNTDETPVEAMYRELREETG. The interval 178 to 205 is disordered; sequence GSSAAGHDRPRKRPRKRGGVLPVRINND. Positions 186–195 are enriched in basic residues; it reads RPRKRPRKRG.

This sequence belongs to the Nudix hydrolase family. RppH subfamily. The cofactor is a divalent metal cation.

In terms of biological role, accelerates the degradation of transcripts by removing pyrophosphate from the 5'-end of triphosphorylated RNA, leading to a more labile monophosphorylated state that can stimulate subsequent ribonuclease cleavage. This Xanthomonas campestris pv. campestris (strain 8004) protein is RNA pyrophosphohydrolase.